Consider the following 558-residue polypeptide: Zeta-carotene desaturase, chloroplastic/chromoplastic (558 aa).

The N-terminal 27 residues, 1 to 27 (MASSVVFAATGSLSVPPLKSRRFYVNS), are a transit peptide targeting the chloroplast and chromoplast.

The protein belongs to the zeta carotene desaturase family. Decylplastoquinone serves as cofactor. It depends on 6-decylubiquinone as a cofactor. As to expression, highly expressed in leaves. Expressed at low levels in flowers and siliques.

The protein resides in the plastid. The protein localises to the chloroplast. It is found in the chromoplast. The enzyme catalyses 9,9'-di-cis-zeta-carotene + 2 a quinone = 7,7',9,9'-tetra-cis-lycopene + 2 a quinol. It functions in the pathway carotenoid biosynthesis; lycopene biosynthesis. In terms of biological role, plays a crucial role in plant growth and development. Is essential for the biosynthesis of carotenoids. Carotenoids are involved in different physiological processes, including coloration, photoprotection, biosynthesis of abscisic acid (ABA) and chloroplast biogenesis. Catalyzes the conversion of zeta-carotene to lycopene via the intermediary of neurosporene. It carries out two consecutive desaturations (introduction of double bonds) at positions C-7 and C-7'. Shows stereoselectivity toward trans C15-C15'zeta-carotene double bond. The zeta-carotene produced by the phytoene desaturase PDS has a C15-C15' double bond in the cis configuration and it requires isomerization before being recognized as substrate by ZDS. The main product is 7,9,7',9'-tetra-cis-lycopene (pro-lycopene). In Arabidopsis thaliana (Mouse-ear cress), this protein is Zeta-carotene desaturase, chloroplastic/chromoplastic.